The sequence spans 271 residues: Phosphatidylinositol transfer protein beta isoform (271 aa).

Residue Lys215 is modified to N6-acetyllysine. Ser262 is subject to Phosphoserine.

The protein belongs to the PtdIns transfer protein family. PI transfer class I subfamily. Post-translationally, constitutive phosphorylation of Ser-262 has no effect on phospholipid transfer activity but is required for Golgi targeting.

It localises to the golgi apparatus. The protein localises to the golgi apparatus membrane. It is found in the endoplasmic reticulum membrane. It catalyses the reaction a 1,2-diacyl-sn-glycero-3-phosphocholine(in) = a 1,2-diacyl-sn-glycero-3-phosphocholine(out). It carries out the reaction a 1,2-diacyl-sn-glycero-3-phospho-(1D-myo-inositol)(in) = a 1,2-diacyl-sn-glycero-3-phospho-(1D-myo-inositol)(out). The catalysed reaction is an N-(acyl)-sphingosylphosphocholine(in) = an N-(acyl)-sphingosylphosphocholine(out). In terms of biological role, catalyzes the transfer of phosphatidylinositol, phosphatidylcholine and sphingomyelin between membranes. Required for COPI-mediated retrograde transport from the Golgi to the endoplasmic reticulum; phosphatidylinositol and phosphatidylcholine transfer activity is essential for this function. This Bos taurus (Bovine) protein is Phosphatidylinositol transfer protein beta isoform (PITPNB).